A 459-amino-acid chain; its full sequence is MIKHFLEDNSDDAELSKFVKDFPGSEPCHPTESKTRVARPQILEPRPQSPDLCDDDVEFRATLWSQPSDSQQYFCPPAPLSPSSRPRSPWGKLDPYDSSEDDKEYVGFATLPNQVHRKSVKKGFDFTLMVAGESGLGKSTLVNSLFLTDLYRDRKLLGAEERIMQTVEITKHAVDIEEKGVRLRLTIVDTPGFGDAVNNTECWRPVAEYIDQQFEQYFRDESGLNRKNIQDNRVHCCLYFISPFGHGLRPLDVEFMKALHQRVNIVPILAKADTLTPSEVDRKKCKIREEIEHFGIKIYQFPDCDSDEDEDFKLQDQALKESIPFAVIGSNTVVEARGRRVRGRLYPWGIVEVENPGHCDFVKLRTMLVRTHMQDLKDVTRETHYENYRAQCIQSMTRLVVKERNRNKLTRESGTDFPIPAVPPGTDPETEKLIREKDEELRRMQEMLHKIQRQMKETH.

4 positions are modified to phosphoserine: S10, S49, S98, and S99. 2 disordered regions span residues F18 to L52 and S70 to S98. Positions K122–S395 constitute a Septin-type G domain. The tract at residues G132–S139 is G1 motif. GTP is bound by residues G132–S139 and T166. The G3 motif stretch occupies residues D189–G192. A G4 motif region spans residues A270–D273. A GTP-binding site is contributed by K271 to E279. S306 bears the Phosphoserine mark. Residues G329 and R344 each contribute to the GTP site. The interval T410–T430 is disordered. Residue S413 is modified to Phosphoserine. T415 carries the post-translational modification Phosphothreonine. Residues I434–H459 are a coiled coil.

This sequence belongs to the TRAFAC class TrmE-Era-EngA-EngB-Septin-like GTPase superfamily. Septin GTPase family. As to quaternary structure, septins polymerize into heterooligomeric protein complexes that form filaments, and can associate with cellular membranes, actin filaments and microtubules. GTPase activity is required for filament formation. Interacts with SEPTIN8. Component of a septin core octameric complex consisting of SEPTIN12, SEPTIN7, SEPTIN6 and SEPTIN2 or SEPTIN4 in the order 12-7-6-2-2-6-7-12 or 12-7-6-4-4-6-7-12. Interacts with SEPTIN14 (via C-terminus). Interacts with DYRK1A. Interacts with SLC6A3/DAT and SNCA/alpha-synuclein. Interacts with STX1A; in the striatum. Interacts with XIAP (via BIR3 domain) following the induction of apoptosis. Interacts with AREL1 (via HECT domain); in the cytoplasm following induction of apoptosis. Post-translationally, phosphorylated by DYRK1A.

The protein resides in the cytoplasm. It localises to the cell projection. It is found in the cilium. The protein localises to the flagellum. Its subcellular location is the cytoplasmic vesicle. The protein resides in the secretory vesicle. It localises to the axon. It is found in the dendrite. The protein localises to the perikaryon. In terms of biological role, filament-forming cytoskeletal GTPase. Pro-apoptotic protein involved in LGR5-positive intestinal stem cell and Paneth cell expansion in the intestines, via its interaction with XIAP. May also play a role in the regulation of cell fate in the intestine. Positive regulator of apoptosis involved in hematopoietic stem cell homeostasis; via its interaction with XIAP. Negative regulator of repair and hair follicle regeneration in response to injury, due to inhibition of hair follicle stem cell proliferation, potentially via its interaction with XIAP. Plays an important role in male fertility and sperm motility. During spermiogenesis, essential for the establishment of the annulus (a fibrous ring structure connecting the midpiece and the principal piece of the sperm flagellum) which is a requisite for the structural and mechanical integrity of the sperm. Involved in the migration of cortical neurons and the formation of neuron leading processes during embryonic development. Required for dopaminergic metabolism in presynaptic autoreceptors; potentially via activity as a presynaptic scaffold protein. This Rattus norvegicus (Rat) protein is Septin-4.